Consider the following 156-residue polypeptide: ATP synthase subunit b (156 aa).

Residues 7 to 27 (LIGQTIAFIVFVWFCMKFVWP) traverse the membrane as a helical segment.

The protein belongs to the ATPase B chain family. F-type ATPases have 2 components, F(1) - the catalytic core - and F(0) - the membrane proton channel. F(1) has five subunits: alpha(3), beta(3), gamma(1), delta(1), epsilon(1). F(0) has three main subunits: a(1), b(2) and c(10-14). The alpha and beta chains form an alternating ring which encloses part of the gamma chain. F(1) is attached to F(0) by a central stalk formed by the gamma and epsilon chains, while a peripheral stalk is formed by the delta and b chains.

It localises to the cell inner membrane. Its function is as follows. F(1)F(0) ATP synthase produces ATP from ADP in the presence of a proton or sodium gradient. F-type ATPases consist of two structural domains, F(1) containing the extramembraneous catalytic core and F(0) containing the membrane proton channel, linked together by a central stalk and a peripheral stalk. During catalysis, ATP synthesis in the catalytic domain of F(1) is coupled via a rotary mechanism of the central stalk subunits to proton translocation. Component of the F(0) channel, it forms part of the peripheral stalk, linking F(1) to F(0). This chain is ATP synthase subunit b, found in Idiomarina loihiensis (strain ATCC BAA-735 / DSM 15497 / L2-TR).